Reading from the N-terminus, the 156-residue chain is Small ribosomal subunit protein uS7 (156 aa).

Belongs to the universal ribosomal protein uS7 family. Part of the 30S ribosomal subunit. Contacts proteins S9 and S11.

Its function is as follows. One of the primary rRNA binding proteins, it binds directly to 16S rRNA where it nucleates assembly of the head domain of the 30S subunit. Is located at the subunit interface close to the decoding center, probably blocks exit of the E-site tRNA. This chain is Small ribosomal subunit protein uS7, found in Yersinia enterocolitica serotype O:8 / biotype 1B (strain NCTC 13174 / 8081).